The primary structure comprises 104 residues: NADH-quinone oxidoreductase subunit K (104 aa).

The next 3 helical transmembrane spans lie at 4 to 24 (VPAS…LFGA), 31 to 51 (VIVL…LVAF), and 67 to 87 (LFTM…LIAL).

The protein belongs to the complex I subunit 4L family. In terms of assembly, NDH-1 is composed of 14 different subunits. Subunits NuoA, H, J, K, L, M, N constitute the membrane sector of the complex.

It is found in the cell membrane. It catalyses the reaction a quinone + NADH + 5 H(+)(in) = a quinol + NAD(+) + 4 H(+)(out). Its function is as follows. NDH-1 shuttles electrons from NADH, via FMN and iron-sulfur (Fe-S) centers, to quinones in the respiratory chain. The immediate electron acceptor for the enzyme in this species is believed to be a menaquinone. Couples the redox reaction to proton translocation (for every two electrons transferred, four hydrogen ions are translocated across the cytoplasmic membrane), and thus conserves the redox energy in a proton gradient. The polypeptide is NADH-quinone oxidoreductase subunit K (Bacillus mycoides (strain KBAB4) (Bacillus weihenstephanensis)).